The sequence spans 260 residues: ATP synthase subunit a (260 aa).

The next 6 helical transmembrane spans lie at 37-57 (FTNA…FMTL), 95-115 (FFPF…IGMF), 125-145 (IVVT…TGFV), 154-174 (VFVP…IEII), 191-211 (MLAG…FMTM), and 233-253 (EFLV…MYLH).

The protein belongs to the ATPase A chain family. F-type ATPases have 2 components, CF(1) - the catalytic core - and CF(0) - the membrane proton channel. CF(1) has five subunits: alpha(3), beta(3), gamma(1), delta(1), epsilon(1). CF(0) has three main subunits: a(1), b(2) and c(9-12). The alpha and beta chains form an alternating ring which encloses part of the gamma chain. CF(1) is attached to CF(0) by a central stalk formed by the gamma and epsilon chains, while a peripheral stalk is formed by the delta and b chains.

The protein localises to the cell inner membrane. Functionally, key component of the proton channel; it plays a direct role in the translocation of protons across the membrane. This Parvibaculum lavamentivorans (strain DS-1 / DSM 13023 / NCIMB 13966) protein is ATP synthase subunit a.